Consider the following 465-residue polypeptide: Pancreatic triacylglycerol lipase (465 aa).

A signal peptide spans 1 to 16 (MLLLWALPLLLGAVAG). Cystine bridges form between Cys20–Cys26 and Cys108–Cys119. Catalysis depends on Ser170, which acts as the Nucleophile. Asp194 functions as the Charge relay system in the catalytic mechanism. Positions 205, 208, 210, and 213 each coordinate Ca(2+). Cys255 and Cys279 are oxidised to a cystine. The active-site Charge relay system is the His281. 3 cysteine pairs are disulfide-bonded: Cys303/Cys314, Cys317/Cys321, and Cys449/Cys465. The PLAT domain occupies 355–465 (WRYQVAVTLS…EDILLTLTPC (111 aa)).

It belongs to the AB hydrolase superfamily. Lipase family. As to quaternary structure, forms a 1:1 stoichiometric complex with (pro)colipase/CLPS.

It localises to the secreted. The catalysed reaction is a triacylglycerol + H2O = a diacylglycerol + a fatty acid + H(+). The enzyme catalyses 1,2,3-tributanoylglycerol + H2O = dibutanoylglycerol + butanoate + H(+). It carries out the reaction 1,2,3-tri-(9Z-octadecenoyl)-glycerol + H2O = di-(9Z)-octadecenoylglycerol + (9Z)-octadecenoate + H(+). It catalyses the reaction all-trans-retinyl hexadecanoate + H2O = all-trans-retinol + hexadecanoate + H(+). The catalysed reaction is 1,2-di-(9Z-octadecenoyl)-glycerol + H2O = (9Z-octadecenoyl)-glycerol + (9Z)-octadecenoate + H(+). Inhibited by bile salts, is reactivated by (pro)colipase/CLPS. In terms of biological role, plays an important role in fat metabolism. It preferentially splits the esters of long-chain fatty acids at positions 1 and 3, producing mainly 2-monoacylglycerol and free fatty acids, and shows considerably higher activity against insoluble emulsified substrates than against soluble ones. This Oryctolagus cuniculus (Rabbit) protein is Pancreatic triacylglycerol lipase (PNLIP).